The sequence spans 254 residues: MQVQCQQSPVLAGSATLVALGALVLYVAKPSGYGKHTESLKPAATRLPARAAWFLQELPSFAVPAGILARQPLSLFGPPGTVLLGLFCVHYFHRTFVYSLLNRGRPYPAVLIFRGIAFCAGNGFLQSYYLIYCAEYPDGWYTDIRFCLGVFLFILGMGVNIHSDYILRQLRKPGEITYRIPKGGLFTYVSGANFLGEIIEWIGYALATWSLPALAFAFFSVCFLGLRAFHHHRFYLKMFEDYPKSRKALIPFIF.

The next 4 helical transmembrane spans lie at 8 to 28 (SPVL…LYVA), 72 to 92 (PLSL…VHYF), 146 to 166 (FCLG…SDYI), and 206 to 226 (LATW…FLGL).

It belongs to the steroid 5-alpha reductase family.

It localises to the microsome membrane. The protein resides in the endoplasmic reticulum membrane. It carries out the reaction a 3-oxo-5alpha-steroid + NADP(+) = a 3-oxo-Delta(4)-steroid + NADPH + H(+). It catalyses the reaction 17beta-hydroxy-5alpha-androstan-3-one + NADP(+) = testosterone + NADPH + H(+). The catalysed reaction is 5alpha-pregnane-3,20-dione + NADP(+) = progesterone + NADPH + H(+). Converts testosterone (T) into 5-alpha-dihydrotestosterone (DHT) and progesterone or corticosterone into their corresponding 5-alpha-3-oxosteroids. It plays a central role in sexual differentiation and androgen physiology. This chain is 3-oxo-5-alpha-steroid 4-dehydrogenase 2 (SRD5A2), found in Macaca fascicularis (Crab-eating macaque).